A 246-amino-acid polypeptide reads, in one-letter code: V-type proton ATPase subunit D (246 aa).

This sequence belongs to the V-ATPase D subunit family. In terms of assembly, V-ATPase is a heteromultimeric enzyme made up of two complexes: the ATP-hydrolytic V1 complex and the proton translocation V0 complex. The V1 complex consists of three catalytic AB heterodimers that form a heterohexamer, three peripheral stalks each consisting of EG heterodimers, one central rotor including subunits D and F, and the regulatory subunits C and H. The proton translocation complex V0 consists of the proton transport subunit a, a ring of proteolipid subunits c9c'', rotary subunit d, subunits e and f, and the accessory subunits VhaAC45 and ATP6AP2.

In terms of biological role, subunit of the V1 complex of vacuolar(H+)-ATPase (V-ATPase), a multisubunit enzyme composed of a peripheral complex (V1) that hydrolyzes ATP and a membrane integral complex (V0) that translocates protons. V-ATPase is responsible for acidifying and maintaining the pH of intracellular compartments and in some cell types, is targeted to the plasma membrane, where it is responsible for acidifying the extracellular environment. In Manduca sexta (Tobacco hawkmoth), this protein is V-type proton ATPase subunit D.